We begin with the raw amino-acid sequence, 1080 residues long: Adenylate cyclase type 7 (1080 aa).

The Cytoplasmic segment spans residues 1–33 (MPAKGRYFLNEGEEGPDQDALYEKYQLTSQHGP). A run of 6 helical transmembrane segments spans residues 34–54 (LLLTLLLVAATACVALIIIAF), 63–83 (QAILGMAFLVLAVFAALSVLM), 95–117 (ALALLTWACLVALGYVLVFDAWT), 122–142 (AWEQVPFFLFIVFVVYTLLPF), 147–167 (AVAVGAVSTASHLLVLGSLMG), and 176–196 (VGLQLLANAVIFLCGNLTGAF). Topologically, residues 197-594 (HKHQMQDASR…YRLAPIPRAR (398 aa)) are cytoplasmic. In terms of domain architecture, Guanylate cyclase 1 spans 279–406 (SILYADIVGF…HDVSLANRME (128 aa)). 3 residues coordinate Mg(2+): Asp284, Ile285, and Asp328. ATP-binding positions include 284-289 (DIVGFT), 326-328 (LGD), and Arg372. A disordered region spans residues 454–474 (DPRSQQPPPPSQHLPRPKGDA). Positions 477–482 (KMRASV) are mediates regulation of adenylate cyclase activity by C5 alpha-induced G- beta and gamma pathway. A mediates regulation of adenylate cyclase activity by sphingosine 1-phosphate-induced G alpha 13 pathway region spans residues 491 to 499 (WGAARPFAH). Residues 504-546 (ESVSSGETHVPNGRRPKSVPQRHRRTPDRSMSPKGRSEDDSYD) are disordered. Residues 506-584 (VSSGETHVPN…IFLEKGFERE (79 aa)) are modulates adenylate cyclase activity by modulating the binding of G(s)alpha to the high-affinity G(s)alpha binding site in 7C1a/7C2. Positions 515 to 529 (NGRRPKSVPQRHRRT) are enriched in basic residues. 3 consecutive transmembrane segments (helical) span residues 595–615 (HDFACASLIFVCILLVHVLLM), 620–640 (ALGVSFGLVACVLGLVLGLCF), and 669–688 (LTLAVLTIGSLLTVAIINLP). Asn701 carries an N-linked (GlcNAc...) asparagine glycan. Helical transmembrane passes span 718–737 (PLPYYTCSCVLGFIACSVFL) and 746–773 (VLLTVALVAYLVLFNLSPCWQWDCCGQG). Asn776 and Asn781 each carry an N-linked (GlcNAc...) asparagine glycan. The helical transmembrane segment at 794-814 (DLKTMTNFYLVLFYITLLTLS) threads the bilayer. Residues 815–1080 (RQIDYYCRLD…TAKFQGLGLN (266 aa)) are Cytoplasmic-facing. The 145-residue stretch at 879 to 1023 (CVMFASVPDF…NTVNVASRME (145 aa)) folds into the Guanylate cyclase 2 domain. ATP-binding positions include Lys931, 1010-1012 (DIW), 1017-1021 (NVASR), and Lys1057.

Belongs to the adenylyl cyclase class-4/guanylyl cyclase family. Requires Mg(2+) as cofactor. Mn(2+) serves as cofactor. In terms of processing, phosphorylated by PRKCD.

The protein localises to the membrane. The catalysed reaction is ATP = 3',5'-cyclic AMP + diphosphate. Activated by the G protein alpha subunit. Activated by the G protein beta and gamma subunit complex. Activated by GNA13 and GNA12. Ethanol and phorbol 12,13-dibutanoate significantly potentiate adenylate cyclase activity generated in response to the activation of the prostanoid receptor by the agonist prostaglandin E1(1-) in a PKC-dependent manner. Inhibited by lithium. Catalyzes the formation of cAMP in response to activation of G protein-coupled receptors. Functions in signaling cascades activated namely by thrombin and sphingosine 1-phosphate and mediates regulation of cAMP synthesis through synergistic action of the stimulatory G alpha protein with GNA13. Also, during inflammation, mediates zymosan-induced increase intracellular cAMP, leading to protein kinase A pathway activation in order to modulate innate immune responses through heterotrimeric G proteins G(12/13). Functions in signaling cascades activated namely by dopamine and C5 alpha chain and mediates regulation of cAMP synthesis through synergistic action of the stimulatory G protein with G beta:gamma complex. Functions, through cAMP response regulation, to keep inflammation under control during bacterial infection by sensing the presence of serum factors, such as the bioactive lysophospholipid (LPA) that regulate LPS-induced TNF-alpha production. However, it is also required for the optimal functions of B and T cells during adaptive immune responses by regulating cAMP synthesis in both B and T cells. This is Adenylate cyclase type 7 from Homo sapiens (Human).